Reading from the N-terminus, the 143-residue chain is Spliceosomal protein DIB1 (143 aa).

The protein belongs to the DIM1 family. In terms of assembly, component of the 25S [U4/U6.U5] tri-snRNP.

It is found in the nucleus. In terms of biological role, essential role in pre-mRNA splicing. Also essential for entry into mitosis (G2/M progression) as well as for chromosome segregation during mitosis. This is Spliceosomal protein DIB1 (DIB1) from Eremothecium gossypii (strain ATCC 10895 / CBS 109.51 / FGSC 9923 / NRRL Y-1056) (Yeast).